A 494-amino-acid polypeptide reads, in one-letter code: Glucose-6-phosphate exchanger SLC37A2 (494 aa).

The helical transmembrane segment at 20 to 37 (YRFSILFLTFVFYTSYHL) threads the bilayer. Asn52, Asn63, and Asn67 each carry an N-linked (GlcNAc...) asparagine glycan. 11 helical membrane-spanning segments follow: residues 85–105 (FGVLDNCFLVAYAVGMFFSGI), 116–136 (LSTGMLLSGLFTALFGLGFYW), 146–166 (LVQALNGLVQTTGWPAVVACV), 187–207 (SVGNILGSLIAGVYVSSAWGL), 208–228 (SFIVPGIIIASTGVICFLFLV), 295–315 (LCLLFAKLVSYTFLYWLPLYI), 327–347 (GDLSTLFDVGGILGGIVAGLV), 355–375 (ASTCCAMLIIAAPMLFLYNKI), 384–404 (VGMLLWCGALVNGPYALITTA), 427–447 (AIIDGTGSIGAAVGPLLAGLI), and 455–475 (VFYMLIAADVLACLLLSRLVY).

It belongs to the major facilitator superfamily. Organophosphate:Pi antiporter (OPA) (TC 2.A.1.4) family.

Its subcellular location is the endoplasmic reticulum membrane. It carries out the reaction D-glucose 6-phosphate(in) + phosphate(out) = D-glucose 6-phosphate(out) + phosphate(in). Functionally, inorganic phosphate and glucose-6-phosphate antiporter. May transport cytoplasmic glucose-6-phosphate into the lumen of the endoplasmic reticulum and translocate inorganic phosphate into the opposite direction. The polypeptide is Glucose-6-phosphate exchanger SLC37A2 (Danio rerio (Zebrafish)).